The primary structure comprises 157 residues: ATP synthase subunit b (157 aa).

Residues 7–27 (LIAQLVVFFILAWVTMKFVWP) traverse the membrane as a helical segment.

This sequence belongs to the ATPase B chain family. F-type ATPases have 2 components, F(1) - the catalytic core - and F(0) - the membrane proton channel. F(1) has five subunits: alpha(3), beta(3), gamma(1), delta(1), epsilon(1). F(0) has three main subunits: a(1), b(2) and c(10-14). The alpha and beta chains form an alternating ring which encloses part of the gamma chain. F(1) is attached to F(0) by a central stalk formed by the gamma and epsilon chains, while a peripheral stalk is formed by the delta and b chains.

Its subcellular location is the cell inner membrane. Functionally, f(1)F(0) ATP synthase produces ATP from ADP in the presence of a proton or sodium gradient. F-type ATPases consist of two structural domains, F(1) containing the extramembraneous catalytic core and F(0) containing the membrane proton channel, linked together by a central stalk and a peripheral stalk. During catalysis, ATP synthesis in the catalytic domain of F(1) is coupled via a rotary mechanism of the central stalk subunits to proton translocation. Its function is as follows. Component of the F(0) channel, it forms part of the peripheral stalk, linking F(1) to F(0). The polypeptide is ATP synthase subunit b (Aromatoleum aromaticum (strain DSM 19018 / LMG 30748 / EbN1) (Azoarcus sp. (strain EbN1))).